Reading from the N-terminus, the 688-residue chain is MADLEAVLADVSYLMAMEKSKATPAARASKKVVLPEPSIRSVMQRYLAERNEITFDKIFNQKIGFLLFKDFCLNEIGEAVPQVKFYEEIKEYEKLDNEEDRLHRSRQMYDAYIMRELLSSTHQFSKQAVEHVQSHLSKKQVTPTLFQPYIEEICESLRGDIFQKFMESEKFTRFCQWKNVELNIHLSMNDFSVHRIIGRGGFGEVYGCRKADTGKMYAMKCLDKKRVKMKQGETLALNERIMLSLVSTGDCPFIVCMTYAFHTPDKLCFILDLMNGGDMHYHLSQHGVFSEKEMRFYASEIILGLEHMHTCFVVYRDLKPANILLDEYGHVRISDLGLACDFSKKKPHASVGTHGYMAPEVLQKGTCYDSSADWFSLGCMLFKLLRGHSPFRQHKTKDKHEIDRMTLTVNVQLPDAFSPELRSLLEGLLQRDVSQRLGCYGGGARELKEHIFFKGIDWQYVYLRKYPPPLIPPRGEVNAADAFDIGSFDEEDTKGIKLLDCDQDLYKNFPLMISERWQQEVVETIYDAVNAETDKIEARKKAKNKQLCQEEDYAMGKDCIMHGYMLKLGNPFLTQWQRRYFYLFPNRLEWRGEGESRQNLLTMEQIMSVEETQIKDRKCILLRVKGGKQFVLQCESDPEFAQWLKELTCTFNEAQRLLRRAPKFLNKPRAAILEFSKPPLCHRNSSGL.

Positions 1–190 (MADLEAVLAD…ELNIHLSMND (190 aa)) are N-terminal. The RGS domain occupies 54-175 (TFDKIFNQKI…MESEKFTRFC (122 aa)). Residues 191–453 (FSVHRIIGRG…ARELKEHIFF (263 aa)) enclose the Protein kinase domain. Residues 197 to 205 (IGRGGFGEV) and Lys220 each bind ATP. The active-site Proton acceptor is the Asp317. Residues 454-521 (KGIDWQYVYL…MISERWQQEV (68 aa)) enclose the AGC-kinase C-terminal domain. Residues 558 to 652 (DCIMHGYMLK…WLKELTCTFN (95 aa)) enclose the PH domain.

Belongs to the protein kinase superfamily. AGC Ser/Thr protein kinase family. GPRK subfamily. In terms of assembly, interacts with GIT1. Post-translationally, ubiquitinated. Expressed in brain cortex, hippocampus, striatum, hypothalamus, cerebellum and brainstem (at protein level).

The protein localises to the postsynapse. The protein resides in the presynapse. The catalysed reaction is [beta-adrenergic receptor] + ATP = [beta-adrenergic receptor]-phosphate + ADP + H(+). Functionally, specifically phosphorylates the agonist-occupied form of the beta-adrenergic and closely related receptors. This Rattus norvegicus (Rat) protein is G protein-coupled receptor kinase 3.